The following is a 101-amino-acid chain: Small ribosomal subunit protein uS14 (101 aa).

It belongs to the universal ribosomal protein uS14 family. In terms of assembly, part of the 30S ribosomal subunit. Contacts proteins S3 and S10.

Binds 16S rRNA, required for the assembly of 30S particles and may also be responsible for determining the conformation of the 16S rRNA at the A site. The protein is Small ribosomal subunit protein uS14 of Methylorubrum populi (strain ATCC BAA-705 / NCIMB 13946 / BJ001) (Methylobacterium populi).